Consider the following 253-residue polypeptide: Imidazole glycerol phosphate synthase subunit HisF (253 aa).

Active-site residues include D11 and D130.

Belongs to the HisA/HisF family. Heterodimer of HisH and HisF.

The protein resides in the cytoplasm. It carries out the reaction 5-[(5-phospho-1-deoxy-D-ribulos-1-ylimino)methylamino]-1-(5-phospho-beta-D-ribosyl)imidazole-4-carboxamide + L-glutamine = D-erythro-1-(imidazol-4-yl)glycerol 3-phosphate + 5-amino-1-(5-phospho-beta-D-ribosyl)imidazole-4-carboxamide + L-glutamate + H(+). Its pathway is amino-acid biosynthesis; L-histidine biosynthesis; L-histidine from 5-phospho-alpha-D-ribose 1-diphosphate: step 5/9. In terms of biological role, IGPS catalyzes the conversion of PRFAR and glutamine to IGP, AICAR and glutamate. The HisF subunit catalyzes the cyclization activity that produces IGP and AICAR from PRFAR using the ammonia provided by the HisH subunit. This Myxococcus xanthus (strain DK1622) protein is Imidazole glycerol phosphate synthase subunit HisF.